Reading from the N-terminus, the 390-residue chain is Pyruvate dehydrogenase E1 component subunit alpha, somatic form, mitochondrial (390 aa).

The N-terminal 29 residues, 1 to 29, are a transit peptide targeting the mitochondrion; the sequence is MRKMLAAVSRVLSGASQKPASRVLVASRN. K63 bears the N6-acetyllysine; alternate mark. Position 63 is an N6-succinyllysine; alternate (K63). Pyruvate-binding residues include H92, Y118, R119, A157, G165, V167, D196, G197, A198, N225, and Y227. The thiamine diphosphate site is built by Y118 and R119. Thiamine diphosphate-binding residues include G165, V167, D196, G197, A198, and N225. D196 is a Mg(2+) binding site. N225 and Y227 together coordinate Mg(2+). S232 is modified (phosphoserine; by PDK1). K244 is subject to N6-acetyllysine; alternate. An N6-succinyllysine; alternate modification is found at K244. K277 bears the N6-succinyllysine mark. Residue H292 participates in thiamine diphosphate binding. The residue at position 293 (S293) is a Phosphoserine; by PDK1, PDK2, PDK3 and PDK4. S295 is modified (phosphoserine). At S300 the chain carries Phosphoserine; by PDK1, PDK2, PDK3 and PDK4. Y301 bears the Phosphotyrosine mark. The residue at position 313 (K313) is an N6-acetyllysine; alternate. Residue K313 is modified to N6-succinyllysine; alternate. N6-acetyllysine occurs at positions 321 and 336. At K385 the chain carries N6-succinyllysine.

In terms of assembly, heterotetramer of two PDHA1 and two PDHB subunits. The heterotetramer interacts with DLAT, and is part of the multimeric pyruvate dehydrogenase complex that contains multiple copies of pyruvate dehydrogenase (E1), dihydrolipoamide acetyltransferase (DLAT, E2) and lipoamide dehydrogenase (DLD, E3). These subunits are bound to an inner core composed of about 48 DLAT and 12 PDHX molecules. Requires thiamine diphosphate as cofactor. Mg(2+) is required as a cofactor. Post-translationally, phosphorylation at Ser-232, Ser-293 and Ser-300 by PDK family kinases inactivates the enzyme; for this phosphorylation at a single site is sufficient. Phosphorylation at Ser-293 interferes with access to active site, and thereby inactivates the enzyme. Dephosphorylation at all three sites, i.e. at Ser-232, Ser-293 and Ser-300, is required for reactivation. Acetylation alters the phosphorylation pattern. Deacetylated by SIRT3.

It localises to the mitochondrion matrix. It carries out the reaction N(6)-[(R)-lipoyl]-L-lysyl-[protein] + pyruvate + H(+) = N(6)-[(R)-S(8)-acetyldihydrolipoyl]-L-lysyl-[protein] + CO2. With respect to regulation, pyruvate dehydrogenase activity is inhibited by phosphorylation of PDHA1; it is reactivated by dephosphorylation. The pyruvate dehydrogenase complex catalyzes the overall conversion of pyruvate to acetyl-CoA and CO(2), and thereby links the glycolytic pathway to the tricarboxylic cycle. The polypeptide is Pyruvate dehydrogenase E1 component subunit alpha, somatic form, mitochondrial (PDHA1) (Pan troglodytes (Chimpanzee)).